We begin with the raw amino-acid sequence, 421 residues long: UDP-N-acetylglucosamine 1-carboxyvinyltransferase (421 aa).

Residue 22 to 23 participates in phosphoenolpyruvate binding; sequence KN. R93 contributes to the UDP-N-acetyl-alpha-D-glucosamine binding site. Catalysis depends on C117, which acts as the Proton donor. C117 carries the post-translational modification 2-(S-cysteinyl)pyruvic acid O-phosphothioketal. UDP-N-acetyl-alpha-D-glucosamine contacts are provided by residues 122 to 126, D308, and I330; that span reads RPVDL.

It belongs to the EPSP synthase family. MurA subfamily.

It localises to the cytoplasm. It catalyses the reaction phosphoenolpyruvate + UDP-N-acetyl-alpha-D-glucosamine = UDP-N-acetyl-3-O-(1-carboxyvinyl)-alpha-D-glucosamine + phosphate. It participates in cell wall biogenesis; peptidoglycan biosynthesis. Functionally, cell wall formation. Adds enolpyruvyl to UDP-N-acetylglucosamine. In Pseudomonas putida (strain W619), this protein is UDP-N-acetylglucosamine 1-carboxyvinyltransferase.